A 276-amino-acid polypeptide reads, in one-letter code: NH(3)-dependent NAD(+) synthetase (276 aa).

43–50 (GISGGVDS) serves as a coordination point for ATP. D49 lines the Mg(2+) pocket. R146 provides a ligand contact to deamido-NAD(+). Residue T166 coordinates ATP. A Mg(2+)-binding site is contributed by E171. Deamido-NAD(+) contacts are provided by K179 and D186. The ATP site is built by K195 and T217. A deamido-NAD(+)-binding site is contributed by 266-267 (HK).

The protein belongs to the NAD synthetase family. In terms of assembly, homodimer.

It catalyses the reaction deamido-NAD(+) + NH4(+) + ATP = AMP + diphosphate + NAD(+) + H(+). The protein operates within cofactor biosynthesis; NAD(+) biosynthesis; NAD(+) from deamido-NAD(+) (ammonia route): step 1/1. In terms of biological role, catalyzes the ATP-dependent amidation of deamido-NAD to form NAD. Uses ammonia as a nitrogen source. This is NH(3)-dependent NAD(+) synthetase from Aliivibrio fischeri (strain MJ11) (Vibrio fischeri).